Consider the following 82-residue polypeptide: Immediate early response 3-interacting protein 1 (82 aa).

Transmembrane regions (helical) follow at residues 2–22 and 62–82; these read AFTLYTLLQAALLCVNAVAVL and VMRVPLIIVNSVTIVLLLLFG.

The protein belongs to the YOS1 family.

Its subcellular location is the endoplasmic reticulum membrane. In terms of biological role, regulator of endoplasmic reticulum secretion that acts as a key determinant of brain size. Required for secretion of extracellular matrix proteins. Required for correct brain development by depositing sufficient extracellular matrix proteins for tissue integrity and the proliferation of neural progenitors. Acts as a regulator of the unfolded protein response (UPR). The polypeptide is Immediate early response 3-interacting protein 1 (Xenopus laevis (African clawed frog)).